The chain runs to 341 residues: tRNA N6-adenosine threonylcarbamoyltransferase (341 aa).

Residues His115 and His119 each contribute to the Fe cation site. Substrate is bound by residues 138–142 (LVSGG), Asp171, Gly184, and Asn276. Residue Asp304 coordinates Fe cation.

This sequence belongs to the KAE1 / TsaD family. Fe(2+) serves as cofactor.

The protein localises to the cytoplasm. The enzyme catalyses L-threonylcarbamoyladenylate + adenosine(37) in tRNA = N(6)-L-threonylcarbamoyladenosine(37) in tRNA + AMP + H(+). In terms of biological role, required for the formation of a threonylcarbamoyl group on adenosine at position 37 (t(6)A37) in tRNAs that read codons beginning with adenine. Is involved in the transfer of the threonylcarbamoyl moiety of threonylcarbamoyl-AMP (TC-AMP) to the N6 group of A37, together with TsaE and TsaB. TsaD likely plays a direct catalytic role in this reaction. The chain is tRNA N6-adenosine threonylcarbamoyltransferase from Stenotrophomonas maltophilia (strain R551-3).